Here is a 266-residue protein sequence, read N- to C-terminus: Tryptophan synthase alpha chain (266 aa).

Active-site proton acceptor residues include glutamate 49 and aspartate 60.

The protein belongs to the TrpA family. In terms of assembly, tetramer of two alpha and two beta chains.

It catalyses the reaction (1S,2R)-1-C-(indol-3-yl)glycerol 3-phosphate + L-serine = D-glyceraldehyde 3-phosphate + L-tryptophan + H2O. It participates in amino-acid biosynthesis; L-tryptophan biosynthesis; L-tryptophan from chorismate: step 5/5. The alpha subunit is responsible for the aldol cleavage of indoleglycerol phosphate to indole and glyceraldehyde 3-phosphate. The protein is Tryptophan synthase alpha chain of Thioalkalivibrio sulfidiphilus (strain HL-EbGR7).